Consider the following 90-residue polypeptide: Small ribosomal subunit protein uS15c (90 aa).

This sequence belongs to the universal ribosomal protein uS15 family. Part of the 30S ribosomal subunit.

The protein resides in the plastid. This is Small ribosomal subunit protein uS15c (rps15) from Cuscuta reflexa (Southern Asian dodder).